Consider the following 108-residue polypeptide: UPF0235 protein MM_0822 (108 aa).

Belongs to the UPF0235 family.

This is UPF0235 protein MM_0822 from Methanosarcina mazei (strain ATCC BAA-159 / DSM 3647 / Goe1 / Go1 / JCM 11833 / OCM 88) (Methanosarcina frisia).